A 185-amino-acid polypeptide reads, in one-letter code: dTTP/UTP pyrophosphatase (185 aa).

D64 serves as the catalytic Proton acceptor.

Belongs to the Maf family. YhdE subfamily. The cofactor is a divalent metal cation.

The protein resides in the cytoplasm. The catalysed reaction is dTTP + H2O = dTMP + diphosphate + H(+). It catalyses the reaction UTP + H2O = UMP + diphosphate + H(+). In terms of biological role, nucleoside triphosphate pyrophosphatase that hydrolyzes dTTP and UTP. May have a dual role in cell division arrest and in preventing the incorporation of modified nucleotides into cellular nucleic acids. The polypeptide is dTTP/UTP pyrophosphatase (Leptospira borgpetersenii serovar Hardjo-bovis (strain JB197)).